Here is a 161-residue protein sequence, read N- to C-terminus: UPF0178 protein Rsph17025_3122 (161 aa).

This sequence belongs to the UPF0178 family.

The sequence is that of UPF0178 protein Rsph17025_3122 from Cereibacter sphaeroides (strain ATCC 17025 / ATH 2.4.3) (Rhodobacter sphaeroides).